The sequence spans 1354 residues: Ubiquitin carboxyl-terminal hydrolase 47 (1354 aa).

The span at 114–133 (EQPQLASDESGTADSSGLDD) shows a compositional bias: polar residues. Residues 114–139 (EQPQLASDESGTADSSGLDDSTQEKF) form a disordered region. Positions 174–549 (VGLVNQAMTC…NAYMLMYRLK (376 aa)) constitute a USP domain. The active-site Nucleophile is cysteine 183. The interval 408–438 (DVEDEKSPQTDSCTDSGAENEGSCHSDQMSN) is disordered. Residues 416–438 (QTDSCTDSGAENEGSCHSDQMSN) show a composition bias toward polar residues. The active-site Proton acceptor is the histidine 488. The span at 863 to 882 (LSLQQHQDGGNGDSSKSTEG) shows a compositional bias: polar residues. 2 disordered regions span residues 863–1004 (LSLQ…ESGK) and 1314–1335 (LAKK…SPRK). Residues 920–930 (PEERSDSDVNN) are compositionally biased toward basic and acidic residues. A compositionally biased stretch (low complexity) spans 933-949 (STSSVDSDILSSSHSSD). Basic and acidic residues predominate over residues 977-986 (KANDGKKETW). Positions 987–1000 (DTAEEDSGTDSEYD) are enriched in acidic residues.

This sequence belongs to the peptidase C19 family. USP47 subfamily.

Its subcellular location is the cytoplasm. It catalyses the reaction Thiol-dependent hydrolysis of ester, thioester, amide, peptide and isopeptide bonds formed by the C-terminal Gly of ubiquitin (a 76-residue protein attached to proteins as an intracellular targeting signal).. Functionally, ubiquitin-specific protease that specifically deubiquitinates monoubiquitinated DNA polymerase beta (polb), stabilizing polb thereby playing a role in base-excision repair (BER). This is Ubiquitin carboxyl-terminal hydrolase 47 (usp47) from Xenopus tropicalis (Western clawed frog).